We begin with the raw amino-acid sequence, 69 residues long: Light-harvesting protein B-1015 beta chain (69 aa).

Residues 2-21 are Cytoplasmic-facing; that stretch reads ADLKPSLTGLTEEEAKEFHG. A bacteriochlorophyll-binding residues include His20 and His38. A helical transmembrane segment spans residues 22-44; sequence IFVTSTVLYLATAVIVHYLVWTA. Residues 45–56 lie on the Periplasmic side of the membrane; it reads RPWIAPIPKGWV. Residues 57–69 constitute a propeptide that is removed on maturation; the sequence is NLEGVQSALSYLV.

It belongs to the antenna complex beta subunit family. In terms of assembly, the core complex is formed by different alpha and beta chains, binding bacteriochlorophyll molecules, and arranged most probably in tetrameric structures disposed around the reaction center. The non-pigmented gamma chains may constitute additional components.

It is found in the cell inner membrane. In terms of biological role, antenna complexes are light-harvesting systems, which transfer the excitation energy to the reaction centers. In Blastochloris viridis (Rhodopseudomonas viridis), this protein is Light-harvesting protein B-1015 beta chain (pufB).